A 126-amino-acid polypeptide reads, in one-letter code: Holo-[acyl-carrier-protein] synthase (126 aa).

Mg(2+) is bound by residues D9 and E58.

Belongs to the P-Pant transferase superfamily. AcpS family. Mg(2+) is required as a cofactor.

It is found in the cytoplasm. The enzyme catalyses apo-[ACP] + CoA = holo-[ACP] + adenosine 3',5'-bisphosphate + H(+). Its function is as follows. Transfers the 4'-phosphopantetheine moiety from coenzyme A to a Ser of acyl-carrier-protein. This chain is Holo-[acyl-carrier-protein] synthase, found in Salmonella agona (strain SL483).